A 311-amino-acid chain; its full sequence is tRNA-cytidine(32) 2-sulfurtransferase (311 aa).

The short motif at 47–52 (SGGKDS) is the PP-loop motif element. Residues C122, C125, and C213 each contribute to the [4Fe-4S] cluster site.

The protein belongs to the TtcA family. As to quaternary structure, homodimer. It depends on Mg(2+) as a cofactor. [4Fe-4S] cluster is required as a cofactor.

It localises to the cytoplasm. The catalysed reaction is cytidine(32) in tRNA + S-sulfanyl-L-cysteinyl-[cysteine desulfurase] + AH2 + ATP = 2-thiocytidine(32) in tRNA + L-cysteinyl-[cysteine desulfurase] + A + AMP + diphosphate + H(+). It functions in the pathway tRNA modification. In terms of biological role, catalyzes the ATP-dependent 2-thiolation of cytidine in position 32 of tRNA, to form 2-thiocytidine (s(2)C32). The sulfur atoms are provided by the cysteine/cysteine desulfurase (IscS) system. The polypeptide is tRNA-cytidine(32) 2-sulfurtransferase (Klebsiella pneumoniae subsp. pneumoniae (strain ATCC 700721 / MGH 78578)).